The sequence spans 274 residues: Large ribosomal subunit protein uL2cy (274 aa).

Disordered stretches follow at residues 1–20 (MAIHLYKTSTPSTRNGAVDS) and 224–274 (NPVD…RRSK).

Belongs to the universal ribosomal protein uL2 family. Part of the 50S ribosomal subunit.

The protein resides in the plastid. It is found in the chloroplast. This Populus alba (White poplar) protein is Large ribosomal subunit protein uL2cy (rpl2-B).